A 276-amino-acid polypeptide reads, in one-letter code: RNA-binding protein pno-1 (276 aa).

Disordered stretches follow at residues 1-30 (MATS…VPST) and 62-101 (DVVM…SRVV). The span at 8–27 (FDDEFPMEEGMPELLDDEDV) shows a compositional bias: acidic residues. Residues 197-249 (GDHVSRAIGRIAGKDGRTKLVIENTTKTRIVVANTKIHILGAYQNLKLARNAV) enclose the KH domain.

The protein belongs to the PNO1 family. Part of the small subunit (SSU) processome, composed of more than 70 proteins and the RNA chaperone small nucleolar RNA (snoRNA) U3.

It is found in the nucleus. The protein localises to the nucleolus. In terms of biological role, part of the small subunit (SSU) processome, first precursor of the small eukaryotic ribosomal subunit. During the assembly of the SSU processome in the nucleolus, many ribosome biogenesis factors, an RNA chaperone and ribosomal proteins associate with the nascent pre-rRNA and work in concert to generate RNA folding, modifications, rearrangements and cleavage as well as targeted degradation of pre-ribosomal RNA by the RNA exosome. Positively regulates dimethylation of two adjacent adenosines in the loop of a conserved hairpin near the 3'-end of 18S rRNA. This Caenorhabditis briggsae protein is RNA-binding protein pno-1.